Here is a 469-residue protein sequence, read N- to C-terminus: Glutamate--tRNA ligase (469 aa).

The short motif at 9–19 (PSPTGFLHVGG) is the 'HIGH' region element. Zn(2+) is bound by residues Cys-98, Cys-100, Cys-125, and Asp-127. Positions 236–240 (KLSKR) match the 'KMSKS' region motif. Lys-239 provides a ligand contact to ATP.

It belongs to the class-I aminoacyl-tRNA synthetase family. Glutamate--tRNA ligase type 1 subfamily. In terms of assembly, monomer. It depends on Zn(2+) as a cofactor.

Its subcellular location is the cytoplasm. The enzyme catalyses tRNA(Glu) + L-glutamate + ATP = L-glutamyl-tRNA(Glu) + AMP + diphosphate. Functionally, catalyzes the attachment of glutamate to tRNA(Glu) in a two-step reaction: glutamate is first activated by ATP to form Glu-AMP and then transferred to the acceptor end of tRNA(Glu). The polypeptide is Glutamate--tRNA ligase (Shewanella sp. (strain W3-18-1)).